Consider the following 902-residue polypeptide: Leucine-rich repeat-containing G-protein coupled receptor 5 (902 aa).

A signal peptide spans 1 to 22; the sequence is MDTSKTSFFLFSVLCSLQLVGA. The Extracellular portion of the chain corresponds to 23-558; that stretch reads ARPGKQQRSC…HLFGSWLTRT (536 aa). Intrachain disulfides connect Cys-32–Cys-38 and Cys-36–Cys-49. The 30-residue stretch at 32-61 folds into the LRRNT domain; the sequence is CPTPCECEQEGMLVRVDCSDRALTSLPRNL. LRR repeat units lie at residues 41 to 61, 62 to 85, 86 to 109, 111 to 133, 134 to 157, 159 to 181, 182 to 205, 207 to 229, 230 to 253, 254 to 276, 278 to 300, 302 to 324, 325 to 347, 348 to 372, 374 to 393, 394 to 417, and 418 to 441; these read EGMLVRVDCSDRALTSLPRNL, SIFTSYLDLSMNNITNLPSNVMHN, LHFLEELRLAGNDLTYIPKGAFAG, GSLKVLMLQNNLLRQVPSEALHN, LRSLQSLRLDANHISYVPPSSFNG, FSLRHLWLDDNSLTEIPVRALES, LSALQAMTLALNKIHHIPDYAFRN, SSLVVLHLHNNRIYSLGKKCFDG, LHSLETLDLNYNNLDEFPAAIKTL, KNLKELGFHSNNIKSIPEQAFIG, PSLITIHFYDNPIQHVGRSAFQH, PELRTLILNGASQITEFPDLTGT, TSLESLTLTGAQLVYLPSAVCTQ, LPNLQVLDLSYNHIKDLPSFSGCQR, QKIDLRHNEVYEIRSTTFQQ, LVGLRSLDLAWNKIAVIHPNSFSS, and LPSLIKLDLSSNHLTSFPVTGLHG. Asn-60 and Asn-74 each carry an N-linked (GlcNAc...) asparagine glycan. Residue Asn-205 is glycosylated (N-linked (GlcNAc...) asparagine). An intrachain disulfide couples Cys-345 to Cys-370. Cys-476 and Cys-537 are disulfide-bonded. N-linked (GlcNAc...) asparagine glycosylation occurs at Asn-496. Residues 559 to 579 form a helical membrane-spanning segment; the sequence is GVWLIVLLSFVCNALVIATVF. The Cytoplasmic segment spans residues 580–589; the sequence is RPLSYVPSIK. The chain crosses the membrane as a helical span at residues 590–610; it reads LLIGLIAIMNTLMGLSSGVLA. The LRR 18 repeat unit spans residues 598-619; that stretch reads MNTLMGLSSGVLATVDALTFGN. Over 611-634 the chain is Extracellular; it reads TVDALTFGNFAQYGAWWESGVGCQ. Cys-633 and Cys-708 are joined by a disulfide. The helical transmembrane segment at 635 to 655 threads the bilayer; that stretch reads ITGFLSVFAAETSIFLLTVAA. Over 656 to 678 the chain is Cytoplasmic; sequence LERGFSIKCTTKFETKSSFINVK. Residues 679–699 form a helical membrane-spanning segment; that stretch reads LSIVFCFLLSIVIAVSPLLSG. Topologically, residues 700–718 are extracellular; that stretch reads STYGTSPLCFPLLFGDPSS. Residues 719–739 form a helical membrane-spanning segment; the sequence is MGFMVALVLLNSLCFLVMTIA. The Cytoplasmic portion of the chain corresponds to 740-763; sequence YTKLYCSLEKGELENIWDCSMVKH. Residues 764–784 traverse the membrane as a helical segment; the sequence is IALLLFTNCILYCPVAFLSFS. The Extracellular segment spans residues 785 to 798; the sequence is SLLNLTFISPEVNK. N-linked (GlcNAc...) asparagine glycosylation is found at Asn-788 and Asn-797. The chain crosses the membrane as a helical span at residues 799 to 819; that stretch reads SILLLIIPLPACLNPLLYILF. The Cytoplasmic portion of the chain corresponds to 820–902; that stretch reads NPHFKEDIGS…LSAVAFVPCH (83 aa).

The protein belongs to the G-protein coupled receptor 1 family.

It is found in the cell membrane. Its subcellular location is the golgi apparatus. The protein resides in the trans-Golgi network membrane. Its function is as follows. Receptor for R-spondins that potentiates the canonical Wnt signaling pathway and acts as a stem cell marker of the intestinal epithelium and the hair follicle. Upon binding to R-spondins (RSPO1, RSPO2, RSPO3 or RSPO4), associates with phosphorylated LRP6 and frizzled receptors that are activated by extracellular Wnt receptors, triggering the canonical Wnt signaling pathway to increase expression of target genes. In contrast to classical G-protein coupled receptors, does not activate heterotrimeric G-proteins to transduce the signal. Involved in the development and/or maintenance of the adult intestinal stem cells during postembryonic development. The chain is Leucine-rich repeat-containing G-protein coupled receptor 5 (lgr5) from Xenopus tropicalis (Western clawed frog).